The following is a 229-amino-acid chain: Large ribosomal subunit protein uL1 (229 aa).

In terms of assembly, part of the 50S ribosomal subunit.

In terms of biological role, binds directly to 23S rRNA. The L1 stalk is quite mobile in the ribosome, and is involved in E site tRNA release. Its function is as follows. Protein L1 is also a translational repressor protein, it controls the translation of the L11 operon by binding to its mRNA. The chain is Large ribosomal subunit protein uL1 from Rhodopseudomonas palustris (strain ATCC BAA-98 / CGA009).